The chain runs to 168 residues: 2-C-methyl-D-erythritol 2,4-cyclodiphosphate synthase (168 aa).

Residues D13 and H15 each contribute to the a divalent metal cation site. 4-CDP-2-C-methyl-D-erythritol 2-phosphate contacts are provided by residues D13–H15 and H39–S40. A divalent metal cation is bound at residue H47. 4-CDP-2-C-methyl-D-erythritol 2-phosphate is bound by residues D61–G63, F66–D70, F144, and K147.

Belongs to the IspF family. Homotrimer. Requires a divalent metal cation as cofactor.

It carries out the reaction 4-CDP-2-C-methyl-D-erythritol 2-phosphate = 2-C-methyl-D-erythritol 2,4-cyclic diphosphate + CMP. Its pathway is isoprenoid biosynthesis; isopentenyl diphosphate biosynthesis via DXP pathway; isopentenyl diphosphate from 1-deoxy-D-xylulose 5-phosphate: step 4/6. Its function is as follows. Involved in the biosynthesis of isopentenyl diphosphate (IPP) and dimethylallyl diphosphate (DMAPP), two major building blocks of isoprenoid compounds. Catalyzes the conversion of 4-diphosphocytidyl-2-C-methyl-D-erythritol 2-phosphate (CDP-ME2P) to 2-C-methyl-D-erythritol 2,4-cyclodiphosphate (ME-CPP) with a corresponding release of cytidine 5-monophosphate (CMP). This is 2-C-methyl-D-erythritol 2,4-cyclodiphosphate synthase from Cupriavidus metallidurans (strain ATCC 43123 / DSM 2839 / NBRC 102507 / CH34) (Ralstonia metallidurans).